Reading from the N-terminus, the 115-residue chain is MHEYSIVTALIEECERHAFANNASKVSRVEIKLGILSGVEPELLRTAFETFKLEGICREANLVMNIQPLVLRCLDCGQSTEHSERSVICSHCQSGQTKVLDGEDMMLMQLELEQA.

Histidine 2 contacts Ni(2+). Positions 73, 76, 89, and 92 each coordinate Zn(2+).

Belongs to the HypA/HybF family.

Functionally, involved in the maturation of [NiFe] hydrogenases. Required for nickel insertion into the metal center of the hydrogenase. The protein is Hydrogenase maturation factor HypA of Shewanella halifaxensis (strain HAW-EB4).